Consider the following 95-residue polypeptide: Antitoxin VapB (95 aa).

Antitoxin component of a type II toxin-antitoxin (TA) system. Partially neutralizes the RNase activity of cognate toxin VapC. The protein is Antitoxin VapB of Rickettsia bellii (strain RML369-C).